We begin with the raw amino-acid sequence, 349 residues long: Nicotinate-nucleotide--dimethylbenzimidazole phosphoribosyltransferase (349 aa).

The disordered stretch occupies residues Met-1–Arg-20. The Proton acceptor role is filled by Glu-313.

Belongs to the CobT family.

It carries out the reaction 5,6-dimethylbenzimidazole + nicotinate beta-D-ribonucleotide = alpha-ribazole 5'-phosphate + nicotinate + H(+). It functions in the pathway nucleoside biosynthesis; alpha-ribazole biosynthesis; alpha-ribazole from 5,6-dimethylbenzimidazole: step 1/2. Its function is as follows. Catalyzes the synthesis of alpha-ribazole-5'-phosphate from nicotinate mononucleotide (NAMN) and 5,6-dimethylbenzimidazole (DMB). The sequence is that of Nicotinate-nucleotide--dimethylbenzimidazole phosphoribosyltransferase from Mycolicibacterium paratuberculosis (strain ATCC BAA-968 / K-10) (Mycobacterium paratuberculosis).